The primary structure comprises 1179 residues: Protein turtle homolog A (1179 aa).

The first 20 residues, 1–20, serve as a signal peptide directing secretion; it reads MVWCLGLAVLSLVISQGADG. The Extracellular portion of the chain corresponds to 21–734; sequence RGKPEVVSVV…TQLPGLLPQP (714 aa). 5 Ig-like domains span residues 24-124, 136-216, 226-318, 322-410, and 418-502; these read PEVV…DFAN, PQFQ…GSAT, PPVI…AYLT, PAQV…SPVT, and PAFI…TNVY. 5 disulfide bridges follow: Cys41–Cys108, Cys158–Cys206, Cys248–Cys301, Cys344–Cys395, and Cys440–Cys486. N-linked (GlcNAc...) asparagine glycans are attached at residues Asn188 and Asn256. Fibronectin type-III domains are found at residues 507 to 611 and 623 to 718; these read SPHV…TTPA and PLSP…TSGL. N-linked (GlcNAc...) asparagine glycans are attached at residues Asn513 and Asn524. A disordered region spans residues 606-626; that stretch reads LPTTPAAPGLPPTEIPPPLSP. The segment covering 613–626 has biased composition (pro residues); sequence PGLPPTEIPPPLSP. A helical transmembrane segment spans residues 735 to 755; it reads VLAGVVGGVCFLGVAVLVSIL. Topologically, residues 756-1179 are cytoplasmic; the sequence is AGCLLNRRRA…VPHPEQATLL (424 aa). Disordered stretches follow at residues 767-919, 940-988, and 1015-1079; these read RRRR…PLPG, DWPP…VVGA, and AAPR…KRRN. Over residues 785 to 800 the composition is skewed to low complexity; it reads GKSAAPSALGSGSPDS. At Ser809 the chain carries Phosphoserine. Pro residues-rich tracts occupy residues 826–836 and 906–919; these read TPSPHPDPPSS and VAPPPAAPPSPLPG. Thr972 carries the phosphothreonine modification. The PDZ-binding signature appears at 1177-1179; sequence TLL.

Belongs to the immunoglobulin superfamily. Turtle family. As to quaternary structure, interacts with MAGI2 and SHANK1.

It is found in the cell membrane. The protein localises to the synapse. Functionally, functions in dendrite outgrowth and synapse maturation. This Homo sapiens (Human) protein is Protein turtle homolog A (IGSF9).